A 232-amino-acid polypeptide reads, in one-letter code: Ribonuclease 3 (232 aa).

Residues 6–133 (FNDIENRLGV…VIAAVYLDKG (128 aa)) form the RNase III domain. Glu-46 contacts Mg(2+). Asp-50 is a catalytic residue. Positions 119 and 122 each coordinate Mg(2+). Residue Glu-122 is part of the active site. The region spanning 160-229 (DFKTKLQELL…AKEALKRLEK (70 aa)) is the DRBM domain.

The protein belongs to the ribonuclease III family. In terms of assembly, homodimer. It depends on Mg(2+) as a cofactor.

The protein resides in the cytoplasm. The catalysed reaction is Endonucleolytic cleavage to 5'-phosphomonoester.. Functionally, digests double-stranded RNA. Involved in the processing of primary rRNA transcript to yield the immediate precursors to the large and small rRNAs (23S and 16S). Processes some mRNAs, and tRNAs when they are encoded in the rRNA operon. Processes pre-crRNA and tracrRNA of type II CRISPR loci if present in the organism. The protein is Ribonuclease 3 of Clostridium botulinum (strain Alaska E43 / Type E3).